The primary structure comprises 339 residues: Anthranilate phosphoribosyltransferase (339 aa).

5-phospho-alpha-D-ribose 1-diphosphate contacts are provided by residues Gly-79, 82–83, Ser-87, 89–92, 107–115, and Ala-119; these read GD, NIST, and KHGNRAASS. Anthranilate is bound at residue Gly-79. Position 91 (Ser-91) interacts with Mg(2+). An anthranilate-binding site is contributed by Asn-110. Residue Arg-165 participates in anthranilate binding. Residues Asp-224 and Glu-225 each contribute to the Mg(2+) site.

Belongs to the anthranilate phosphoribosyltransferase family. Homodimer. Mg(2+) is required as a cofactor.

It carries out the reaction N-(5-phospho-beta-D-ribosyl)anthranilate + diphosphate = 5-phospho-alpha-D-ribose 1-diphosphate + anthranilate. It participates in amino-acid biosynthesis; L-tryptophan biosynthesis; L-tryptophan from chorismate: step 2/5. In terms of biological role, catalyzes the transfer of the phosphoribosyl group of 5-phosphorylribose-1-pyrophosphate (PRPP) to anthranilate to yield N-(5'-phosphoribosyl)-anthranilate (PRA). This Lactiplantibacillus plantarum (strain ATCC BAA-793 / NCIMB 8826 / WCFS1) (Lactobacillus plantarum) protein is Anthranilate phosphoribosyltransferase.